Consider the following 337-residue polypeptide: Biotin synthase (337 aa).

Residues 62 to 289 (NAVQLSTLIS…KAMVRLSAGR (228 aa)) enclose the Radical SAM core domain. Residues Cys-77, Cys-81, and Cys-84 each coordinate [4Fe-4S] cluster. [2Fe-2S] cluster-binding residues include Cys-121, Cys-152, Cys-212, and Arg-284.

This sequence belongs to the radical SAM superfamily. Biotin synthase family. In terms of assembly, homodimer. Requires [4Fe-4S] cluster as cofactor. The cofactor is [2Fe-2S] cluster.

The catalysed reaction is (4R,5S)-dethiobiotin + (sulfur carrier)-SH + 2 reduced [2Fe-2S]-[ferredoxin] + 2 S-adenosyl-L-methionine = (sulfur carrier)-H + biotin + 2 5'-deoxyadenosine + 2 L-methionine + 2 oxidized [2Fe-2S]-[ferredoxin]. The protein operates within cofactor biosynthesis; biotin biosynthesis; biotin from 7,8-diaminononanoate: step 2/2. Functionally, catalyzes the conversion of dethiobiotin (DTB) to biotin by the insertion of a sulfur atom into dethiobiotin via a radical-based mechanism. The protein is Biotin synthase of Nitrosomonas europaea (strain ATCC 19718 / CIP 103999 / KCTC 2705 / NBRC 14298).